We begin with the raw amino-acid sequence, 147 residues long: Deoxyuridine 5'-triphosphate nucleotidohydrolase (147 aa).

Arg-24 is a Mg(2+) binding site. DUTP contacts are provided by residues 68 to 70, 82 to 85, Tyr-88, Gly-93, Ile-95, and Arg-111; these read PRS and GVID.

This sequence belongs to the dUTPase family. Mg(2+) is required as a cofactor.

It carries out the reaction dUTP + H2O = dUMP + diphosphate + H(+). Its function is as follows. This enzyme is involved in nucleotide metabolism: it produces dUMP, the immediate precursor of thymidine nucleotides and it decreases the intracellular concentration of dUTP so that uracil cannot be incorporated into DNA. The polypeptide is Deoxyuridine 5'-triphosphate nucleotidohydrolase (OPG046) (Bos taurus (Bovine)).